The sequence spans 123 residues: Large ribosomal subunit protein uL14 (123 aa).

Belongs to the universal ribosomal protein uL14 family. In terms of assembly, part of the 50S ribosomal subunit. Forms a cluster with proteins L3 and L19. In the 70S ribosome, L14 and L19 interact and together make contacts with the 16S rRNA in bridges B5 and B8.

Binds to 23S rRNA. Forms part of two intersubunit bridges in the 70S ribosome. This Actinobacillus succinogenes (strain ATCC 55618 / DSM 22257 / CCUG 43843 / 130Z) protein is Large ribosomal subunit protein uL14.